The primary structure comprises 232 residues: NKG2-D type II integral membrane protein (232 aa).

Topologically, residues 1–66 are cytoplasmic; sequence MALIRDRKSH…IEKLKISPMF (66 aa). The chain crosses the membrane as a helical; Signal-anchor for type II membrane protein span at residues 67-89; the sequence is VVRVLAIALAIRFTLNTLMWLAI. Topologically, residues 90-232 are extracellular; it reads FKETFQPVLC…NTYICMKRAV (143 aa). 2 cysteine pairs are disulfide-bonded: Cys112–Cys121 and Cys115–Cys126. The region spanning 122–228 is the C-type lectin domain; the sequence is HRNNCYQFFN…CANLNTYICM (107 aa). Asn137, Asn147, and Asn179 each carry an N-linked (GlcNAc...) asparagine glycan. 2 disulfides stabilise this stretch: Cys143/Cys227 and Cys205/Cys219.

As to quaternary structure, homodimer; disulfide-linked. Heterohexamer composed of two subunits of KLRK1 and four subunits of HCST/DAP10. Isoform 1 (via transmembrane domain) interacts with HCST/DAP10; the interaction is required for KLRK1 cell surface expression on activated CD8(+) T-cells, but is dispensable on activated TYROBP-expressing NK cells. Isoform 2 (via transmembrane domain) interacts with HCST/DAP10 (via transmembrane domain); the interaction is required for KLRK1 NK cell surface expression and induces NK cell-mediated cytotoxicity. Isoform 2 (via transmembrane domain) interacts with TYROBP (via transmembrane domain); the interaction is required for KLRK1 NK cell surface expression and induce NK cell-mediated cytotoxicity and cytokine secretion. Isoform 1 does not interact with TYROBP. Interacts with CEACAM1; recruits PTPN6 that dephosphorylates VAV1. Expressed in natural killer (NK) cells, activated CD8(+) alpha-beta and gamma-delta T-cells and natural killer T (NKT) cells (at protein level). May be expressed on dendritic cell (DC). Isoform 1 is strongly expressed in natural killer (NK) cells. Isoform 2 is weakly expressed in natural killer (NK) cells. Isoform 1 and isoform 2 are expressed in stimulated, but not in unstimulated, CD8(+) T-cells and macrophages.

It localises to the cell membrane. Functions as an activating and costimulatory receptor involved in immunosurveillance upon binding to various cellular stress-inducible ligands displayed at the surface of autologous tumor cells and virus-infected cells. Provides both stimulatory and costimulatory innate immune responses on activated killer (NK) cells, leading to cytotoxic activity. Acts as a costimulatory receptor for T-cell receptor (TCR) in CD8(+) T-cell-mediated adaptive immune responses by amplifying T-cell activation. Stimulates perforin-mediated elimination of ligand-expressing tumor cells. Signaling involves calcium influx, culminating in the expression of TNF-alpha. Participates in NK cell-mediated bone marrow graft rejection. May play a regulatory role in differentiation and survival of NK cells. Binds to ligands belonging to various subfamilies of MHC class I-related glycoproteins including RAET1A, RAET1B, RAET1C, RAET1D, RAET1E, H60 and MULT1. The sequence is that of NKG2-D type II integral membrane protein (Klrk1) from Mus musculus (Mouse).